Consider the following 907-residue polypeptide: NADH-quinone oxidoreductase subunit G (907 aa).

The 2Fe-2S ferredoxin-type domain occupies Met1–Ile83. [2Fe-2S] cluster contacts are provided by Cys34, Cys45, Cys48, and Cys67. The 40-residue stretch at Ile83–Gly122 folds into the 4Fe-4S His(Cys)3-ligated-type domain. [4Fe-4S] cluster-binding residues include His99, Cys103, Cys106, Cys112, Cys151, Cys154, Cys157, Cys201, Cys228, Cys231, Cys235, and Cys263. In terms of domain architecture, 4Fe-4S Mo/W bis-MGD-type spans Met221 to Glu277.

It belongs to the complex I 75 kDa subunit family. In terms of assembly, composed of 13 different subunits. Subunits NuoCD, E, F, and G constitute the peripheral sector of the complex. [2Fe-2S] cluster is required as a cofactor. It depends on [4Fe-4S] cluster as a cofactor.

The enzyme catalyses a quinone + NADH + 5 H(+)(in) = a quinol + NAD(+) + 4 H(+)(out). Its function is as follows. NDH-1 shuttles electrons from NADH, via FMN and iron-sulfur (Fe-S) centers, to quinones in the respiratory chain. Couples the redox reaction to proton translocation (for every two electrons transferred, four hydrogen ions are translocated across the cytoplasmic membrane), and thus conserves the redox energy in a proton gradient. The protein is NADH-quinone oxidoreductase subunit G (nuoG) of Buchnera aphidicola subsp. Baizongia pistaciae (strain Bp).